The sequence spans 239 residues: Protein TIPIN homolog (239 aa).

2 stretches are compositionally biased toward acidic residues: residues 1 to 14 (MDEM…DELD) and 156 to 166 (DGADDDEDDLF). 2 disordered regions span residues 1-38 (MDEM…RRII) and 135-239 (ESTD…NNDW). Basic and acidic residues-rich tracts occupy residues 169–193 (LPEK…EKKN) and 206–223 (YRMM…AREA). Residues 224-239 (EAEDELMEDFDLNNDW) are compositionally biased toward acidic residues.

The protein belongs to the CSM3 family.

It localises to the cytoplasm. Its subcellular location is the nucleus. In terms of biological role, required for normal progression of S-phase. Important for cell survival after DNA damage or replication stress. The sequence is that of Protein TIPIN homolog from Caenorhabditis briggsae.